We begin with the raw amino-acid sequence, 114 residues long: Transmembrane protein 14C (114 aa).

The next 4 helical transmembrane spans lie at 8–28 (LVPLHWLGFGYAALVASGGII), 33–53 (AGSVPSLAAGLLFGGLAGLGS), 62–82 (NIWLFLVTSGTLAGIMGMRFY), and 87–107 (FMPAGLIAGASLLMVVKLGIS).

The protein resides in the mitochondrion membrane. In terms of biological role, required for normal heme biosynthesis. The sequence is that of Transmembrane protein 14C (TMEM14C) from Bos taurus (Bovine).